A 522-amino-acid polypeptide reads, in one-letter code: Ribonuclease Y (522 aa).

Residues 2–22 (WVEILVGSSAAIISGAAGYLL) traverse the membrane as a helical segment. Positions 212–278 (LINTVSIPSE…TKVIELLVED (67 aa)) constitute a KH domain. Residues 338–431 (ALGHSLEVAH…VCAADTLSAA (94 aa)) form the HD domain.

Belongs to the RNase Y family.

It is found in the cell membrane. Endoribonuclease that initiates mRNA decay. The sequence is that of Ribonuclease Y from Nitratiruptor sp. (strain SB155-2).